Here is a 714-residue protein sequence, read N- to C-terminus: Hormonally up-regulated neu tumor-associated kinase (714 aa).

Low complexity predominate over residues 1–15 (MPAAAGDGLLGEPAA). The tract at residues 1 to 26 (MPAAAGDGLLGEPAAPGGGGGAEDAA) is disordered. Residues 62 to 320 (LIGSRKLGEG…IQQALANRWL (259 aa)) form the Protein kinase domain. ATP-binding positions include 68-76 (LGEGSFAKV) and K91. The active-site Proton acceptor is D186. The span at 437–461 (KKPKEQEKRGDFLHRPFSKKLDKNL) shows a compositional bias: basic and acidic residues. Disordered regions lie at residues 437 to 471 (KKPK…SGSL), 518 to 552 (MEFI…HKED), and 590 to 660 (ARRN…VKSR). The segment covering 599 to 611 (LSPGLPSGSMSPL) has biased composition (low complexity). The span at 623 to 635 (AHEDKNSPPKEEG) shows a compositional bias: basic and acidic residues.

Belongs to the protein kinase superfamily. CAMK Ser/Thr protein kinase family. SNF1 subfamily.

The catalysed reaction is L-seryl-[protein] + ATP = O-phospho-L-seryl-[protein] + ADP + H(+). The enzyme catalyses L-threonyl-[protein] + ATP = O-phospho-L-threonyl-[protein] + ADP + H(+). This Pan troglodytes (Chimpanzee) protein is Hormonally up-regulated neu tumor-associated kinase (HUNK).